Reading from the N-terminus, the 95-residue chain is Aspartyl/glutamyl-tRNA(Asn/Gln) amidotransferase subunit C (95 aa).

The protein belongs to the GatC family. Heterotrimer of A, B and C subunits.

It carries out the reaction L-glutamyl-tRNA(Gln) + L-glutamine + ATP + H2O = L-glutaminyl-tRNA(Gln) + L-glutamate + ADP + phosphate + H(+). It catalyses the reaction L-aspartyl-tRNA(Asn) + L-glutamine + ATP + H2O = L-asparaginyl-tRNA(Asn) + L-glutamate + ADP + phosphate + 2 H(+). In terms of biological role, allows the formation of correctly charged Asn-tRNA(Asn) or Gln-tRNA(Gln) through the transamidation of misacylated Asp-tRNA(Asn) or Glu-tRNA(Gln) in organisms which lack either or both of asparaginyl-tRNA or glutaminyl-tRNA synthetases. The reaction takes place in the presence of glutamine and ATP through an activated phospho-Asp-tRNA(Asn) or phospho-Glu-tRNA(Gln). In Pelobacter propionicus (strain DSM 2379 / NBRC 103807 / OttBd1), this protein is Aspartyl/glutamyl-tRNA(Asn/Gln) amidotransferase subunit C.